The chain runs to 292 residues: Cytochrome c1, heme protein, mitochondrial (292 aa).

The N-terminal 46 residues, 1–46 (MFRSFSTAAKQAVKGTYVQRAIVGGAAVVGIGASTMLYADSLTADA), are a transit peptide targeting the mitochondrion. Residues 47–253 (MTAAEHGLHA…SEPEHDERKR (207 aa)) are Mitochondrial intermembrane-facing. The Cytochrome c domain occupies 73 to 226 (SSIRRGYQVY…DLVEYEDGTP (154 aa)). Positions 86, 89, and 90 each coordinate heme c. The interval 117–137 (FEYDDEPDDQGNPKKRPGKLA) is disordered. Met210 contributes to the heme c binding site. Residues 254–272 (LGLKAMIVLSSLYLLSVWV) traverse the membrane as a helical segment. The Mitochondrial matrix portion of the chain corresponds to 273-292 (KKFKWASIKSRKIVFNPPKK).

This sequence belongs to the cytochrome c family. As to quaternary structure, component of the ubiquinol-cytochrome c oxidoreductase (cytochrome b-c1 complex, complex III, CIII), a multisubunit enzyme composed of 3 respiratory subunits cytochrome b, cytochrome c1 and Rieske protein, 2 core protein subunits, and additional low-molecular weight protein subunits. The complex exists as an obligatory dimer and forms supercomplexes (SCs) in the inner mitochondrial membrane with cytochrome c oxidase (complex IV, CIV). Heme c serves as cofactor.

It is found in the mitochondrion inner membrane. The catalysed reaction is a quinol + 2 Fe(III)-[cytochrome c](out) = a quinone + 2 Fe(II)-[cytochrome c](out) + 2 H(+)(out). Its function is as follows. Component of the ubiquinol-cytochrome c oxidoreductase, a multisubunit transmembrane complex that is part of the mitochondrial electron transport chain which drives oxidative phosphorylation. The respiratory chain contains 3 multisubunit complexes succinate dehydrogenase (complex II, CII), ubiquinol-cytochrome c oxidoreductase (cytochrome b-c1 complex, complex III, CIII) and cytochrome c oxidase (complex IV, CIV), that cooperate to transfer electrons derived from NADH and succinate to molecular oxygen, creating an electrochemical gradient over the inner membrane that drives transmembrane transport and the ATP synthase. The cytochrome b-c1 complex catalyzes electron transfer from ubiquinol to cytochrome c, linking this redox reaction to translocation of protons across the mitochondrial inner membrane, with protons being carried across the membrane as hydrogens on the quinol. In the process called Q cycle, 2 protons are consumed from the matrix, 4 protons are released into the intermembrane space and 2 electrons are passed to cytochrome c. Cytochrome c1 is a catalytic core subunit containing a c-type heme. It transfers electrons from the [2Fe-2S] iron-sulfur cluster of the Rieske protein to cytochrome c. In Kluyveromyces lactis (strain ATCC 8585 / CBS 2359 / DSM 70799 / NBRC 1267 / NRRL Y-1140 / WM37) (Yeast), this protein is Cytochrome c1, heme protein, mitochondrial (CYT1).